Reading from the N-terminus, the 396-residue chain is Flavohemoprotein (396 aa).

The Globin domain occupies 1–136; that stretch reads MLDAQTIATV…LANVFINREA (136 aa). Histidine 85 serves as a coordination point for heme b. Residues tyrosine 95 and glutamate 135 each act as charge relay system in the active site. Residues 147–396 form a reductase region; that stretch reads GGWEGTRDFR…YECFGPHKVL (250 aa). An FAD-binding FR-type domain is found at 150-255; it reads EGTRDFRIVA…VAPAGDFFMA (106 aa). FAD is bound by residues tyrosine 188 and 204 to 207; that span reads RQYS. Position 268–273 (268–273) interacts with NADP(+); the sequence is GVGQTP. 389 to 392 serves as a coordination point for FAD; that stretch reads CFGP.

It belongs to the globin family. Two-domain flavohemoproteins subfamily. This sequence in the C-terminal section; belongs to the flavoprotein pyridine nucleotide cytochrome reductase family. Heme b is required as a cofactor. It depends on FAD as a cofactor.

It catalyses the reaction 2 nitric oxide + NADPH + 2 O2 = 2 nitrate + NADP(+) + H(+). It carries out the reaction 2 nitric oxide + NADH + 2 O2 = 2 nitrate + NAD(+) + H(+). Is involved in NO detoxification in an aerobic process, termed nitric oxide dioxygenase (NOD) reaction that utilizes O(2) and NAD(P)H to convert NO to nitrate, which protects the bacterium from various noxious nitrogen compounds. Therefore, plays a central role in the inducible response to nitrosative stress. The chain is Flavohemoprotein from Escherichia coli O6:H1 (strain CFT073 / ATCC 700928 / UPEC).